We begin with the raw amino-acid sequence, 197 residues long: uncharacterized protein (197 aa).

This is an uncharacterized protein from Methanocaldococcus jannaschii (strain ATCC 43067 / DSM 2661 / JAL-1 / JCM 10045 / NBRC 100440) (Methanococcus jannaschii).